The following is a 1531-amino-acid chain: Protein turtle (1531 aa).

The Extracellular segment spans residues 1–858 (MGVCADLGSH…PARVKHKAIT (858 aa)). Residues 19–44 (QHNTEKSKEQQQQSQPLEIPEQRASK) are disordered. 5 consecutive Ig-like C2-type domains span residues 132–243 (PEDA…KNGT), 253–340 (PRFS…ARVI), 344–436 (GAVI…AYLS), 440–529 (PAKV…GVMD), and 536–624 (PAFT…MAVT). Intrachain disulfides connect Cys-150–Cys-227, Cys-275–Cys-324, Cys-366–Cys-419, Cys-462–Cys-513, and Cys-558–Cys-611. 2 consecutive Fibronectin type-III domains span residues 632–728 (QPHA…TLED) and 760–851 (PPRN…VPAR). The helical transmembrane segment at 859 to 879 (AGVVGGILFFIVAIILSVCAV) threads the bilayer. The Cytoplasmic portion of the chain corresponds to 880 to 1531 (KICNKRKRRK…QAMQQMESVC (652 aa)). Disordered regions lie at residues 1248-1269 (EETRRQQQQKQHPLEDHFVPLQ) and 1318-1395 (NLNL…SYPR). A compositionally biased stretch (low complexity) spans 1333-1349 (SPESRSSSSGFGSKNTS). Positions 1380-1389 (QQAQGQTPHG) are enriched in polar residues.

It belongs to the immunoglobulin superfamily. Turtle family. Interacts with bdl. Exclusively expressed in the central nervous system.

The protein resides in the membrane. In terms of biological role, essential protein that plays a role in the establishment of coordinated motor control. In the developing eye, involved in axonal targeting of the R7 photoreceptor. The sequence is that of Protein turtle (tutl) from Drosophila melanogaster (Fruit fly).